Here is a 150-residue protein sequence, read N- to C-terminus: Small ribosomal subunit protein bS6 (150 aa).

Residues 92–150 (KGINKPAKPKKTFKKTFVARKFSRDDESKTHSTEEPRRANTKSTYKKSTSFSQDNKNKK) form a disordered region. The span at 98–109 (AKPKKTFKKTFV) shows a compositional bias: basic residues. Residues 113–129 (FSRDDESKTHSTEEPRR) are compositionally biased toward basic and acidic residues. Residues 132–141 (TKSTYKKSTS) are compositionally biased toward low complexity.

It belongs to the bacterial ribosomal protein bS6 family.

In terms of biological role, binds together with bS18 to 16S ribosomal RNA. The polypeptide is Small ribosomal subunit protein bS6 (Mycoplasmopsis pulmonis (strain UAB CTIP) (Mycoplasma pulmonis)).